Here is a 91-residue protein sequence, read N- to C-terminus: Acylphosphatase (91 aa).

One can recognise an Acylphosphatase-like domain in the interval 3–89; it reads AKHLILSGRV…PAEPGFVKRA (87 aa). Catalysis depends on residues arginine 18 and asparagine 36.

Belongs to the acylphosphatase family.

It catalyses the reaction an acyl phosphate + H2O = a carboxylate + phosphate + H(+). The polypeptide is Acylphosphatase (acyP) (Acidiphilium cryptum (strain JF-5)).